The chain runs to 299 residues: Bifunctional protein FolD (299 aa).

Residues 169 to 171 (GRS), serine 194, and isoleucine 235 each bind NADP(+).

It belongs to the tetrahydrofolate dehydrogenase/cyclohydrolase family. As to quaternary structure, homodimer.

The enzyme catalyses (6R)-5,10-methylene-5,6,7,8-tetrahydrofolate + NADP(+) = (6R)-5,10-methenyltetrahydrofolate + NADPH. It carries out the reaction (6R)-5,10-methenyltetrahydrofolate + H2O = (6R)-10-formyltetrahydrofolate + H(+). The protein operates within one-carbon metabolism; tetrahydrofolate interconversion. Functionally, catalyzes the oxidation of 5,10-methylenetetrahydrofolate to 5,10-methenyltetrahydrofolate and then the hydrolysis of 5,10-methenyltetrahydrofolate to 10-formyltetrahydrofolate. The chain is Bifunctional protein FolD from Nostoc sp. (strain PCC 7120 / SAG 25.82 / UTEX 2576).